A 336-amino-acid polypeptide reads, in one-letter code: Ferrochelatase (336 aa).

Positions 206 and 287 each coordinate Fe cation.

It belongs to the ferrochelatase family.

The protein localises to the cytoplasm. It catalyses the reaction heme b + 2 H(+) = protoporphyrin IX + Fe(2+). It participates in porphyrin-containing compound metabolism; protoheme biosynthesis; protoheme from protoporphyrin-IX: step 1/1. In terms of biological role, catalyzes the ferrous insertion into protoporphyrin IX. The sequence is that of Ferrochelatase from Neisseria meningitidis serogroup B (strain ATCC BAA-335 / MC58).